Consider the following 393-residue polypeptide: Ceramide synthase 4 (393 aa).

Residues 1–31 (MWSSLNDWLWNERLWLPANISWAQLEDHDGL) are Lumenal-facing. Asn-19 carries an N-linked (GlcNAc...) asparagine glycan. A helical membrane pass occupies residues 32–52 (VFPHPQDTLMAVPLALALVVV). The tract at residues 67–128 (WLGVRNQIRR…RRRRNQDRPC (62 aa)) is homeobox-like. The TLC domain maps to 131–332 (KKFCESSWKF…ILCMIYSFIK (202 aa)). Helical transmembrane passes span 140–160 (FVFYLCCFVCGTMVLYHESWL), 179–199 (LYHWYLLELSFYISLLMTLPF), 209–229 (QVIHHFVTIILISFSYSLNLL), and 260–280 (MCDTLFIIFSLVFFYTRLVLF). The Last loop motif motif lies at 291–301 (ESIGNFSPFFG). A helical transmembrane segment spans residues 304 to 324 (FLNILLVILQLLHVFWSWLIL). At 325 to 393 (CMIYSFIKKG…RMVNRHTPAT (69 aa)) the chain is on the cytoplasmic side. Ser-342, Ser-349, and Ser-350 each carry phosphoserine. Residues 346–356 (ELDSSDGEAAE) are compositionally biased toward acidic residues. Residues 346-393 (ELDSSDGEAAEECPQMKNGAAQRPGAAPTDGPRSRAAGRMVNRHTPAT) form a disordered region.

Phosphorylated at the C-terminus by CK2.

It is found in the endoplasmic reticulum membrane. The enzyme catalyses sphinganine + octadecanoyl-CoA = N-(octadecanoyl)-sphinganine + CoA + H(+). The catalysed reaction is eicosanoyl-CoA + sphinganine = N-eicosanoylsphinganine + CoA + H(+). It carries out the reaction docosanoyl-CoA + sphinganine = N-docosanoylsphinganine + CoA + H(+). It catalyses the reaction tetracosanoyl-CoA + sphinganine = N-tetracosanoylsphinganine + CoA + H(+). The enzyme catalyses hexacosanoyl-CoA + sphinganine = N-hexacosanoylsphinganine + CoA + H(+). The catalysed reaction is a fatty acyl-CoA + sphing-4-enine = an N-acylsphing-4-enine + CoA + H(+). It carries out the reaction sphing-4-enine + octadecanoyl-CoA = N-octadecanoylsphing-4-enine + CoA + H(+). It catalyses the reaction hexadecasphinganine + octadecanoyl-CoA = N-octadecanoylhexadecasphinganine + CoA + H(+). It functions in the pathway lipid metabolism; sphingolipid metabolism. Its function is as follows. Ceramide synthase that catalyzes formation of ceramide from sphinganine and acyl-CoA substrates, with high selectivity toward long and very-long chains (C18:0-C22:0) as acyl donor. The polypeptide is Ceramide synthase 4 (Bos taurus (Bovine)).